We begin with the raw amino-acid sequence, 297 residues long: Ribonuclease H2 subunit A (297 aa).

An RNase H type-2 domain is found at 21 to 248 (PCVLGIDEAG…ASTIVEKRCV (228 aa)). Residues Asp27, Glu28, and Asp138 each contribute to the a divalent metal cation site.

This sequence belongs to the RNase HII family. Eukaryotic subfamily. Mn(2+) is required as a cofactor. Mg(2+) serves as cofactor.

It carries out the reaction Endonucleolytic cleavage to 5'-phosphomonoester.. Its function is as follows. Catalytic subunit of RNase HII, an endonuclease that specifically degrades the RNA of RNA:DNA hybrids. Participates in DNA replication, possibly by mediating the removal of lagging-strand Okazaki fragment RNA primers during DNA replication. Mediates the excision of single ribonucleotides from DNA:RNA duplexes. This Caenorhabditis elegans protein is Ribonuclease H2 subunit A (rnh-2).